The chain runs to 147 residues: Truncated RecQ DNA helicase-like protein C212.06c (147 aa).

One can recognise a Helicase C-terminal domain in the interval 1–72; it reads MGVRLVVHYR…CVRSFLASEM (72 aa). A disordered region spans residues 100–147; sequence ETPKPAIATHSRYNASFSSSPPPQPGSSSGMSAMNTNTTSTTPVSGKT. Positions 125 to 141 are enriched in low complexity; that stretch reads GSSSGMSAMNTNTTSTT.

It belongs to the helicase family. RecQ subfamily.

Its function is as follows. Truncated ATP-dependent 3'-5' DNA helicase. In Schizosaccharomyces pombe (strain 972 / ATCC 24843) (Fission yeast), this protein is Truncated RecQ DNA helicase-like protein C212.06c.